The chain runs to 535 residues: Keratin, type II cytoskeletal 79 (535 aa).

Polar residues-rich tracts occupy residues 1-12 (MRSSVSRQTYST) and 28-38 (QARTSFSSVTV). The disordered stretch occupies residues 1 to 53 (MRSSVSRQTYSTKGAFSSSSASGGGGSQARTSFSSVTVSRNSGRGGGPRCGPS). A head region spans residues 1–141 (MRSSVSRQTY…DPEIQRVRTE (141 aa)). The segment covering 43-53 (GRGGGPRCGPS) has biased composition (gly residues). Residues 142-177 (EREQIKTLNNKFASFIDKVRFLEQQNKVLETKWALL) are coil 1A. Residues 142–457 (EREQIKTLNN…KLLESEESRM (316 aa)) form the IF rod domain. The tract at residues 178 to 198 (QEQGQKSGVTRNNLEPLFEHF) is linker 1. The interval 199 to 290 (INNLRGKLDN…HLYEEELSQV (92 aa)) is coil 1B. The tract at residues 291 to 314 (QTHVSDTSVILSMDNNRNLDLDSI) is linker 12. Residues 315–453 (IAEVKAQYEQ…ATYRKLLESE (139 aa)) form a coil 2 region. Residues 454-535 (ESRMSGECPS…TTVKTSSRRY (82 aa)) are tail.

This sequence belongs to the intermediate filament family. In terms of assembly, heterotetramer of two type I and two type II keratins.

In Bos taurus (Bovine), this protein is Keratin, type II cytoskeletal 79 (KRT79).